The chain runs to 464 residues: Fumarate hydratase class II (464 aa).

Residues 98–100, 129–132, 139–141, and Thr187 each bind substrate; these read SGT, HPND, and SSN. His188 (proton donor/acceptor) is an active-site residue. Ser318 is an active-site residue. Substrate contacts are provided by residues Ser319 and 324–326; that span reads KVN.

It belongs to the class-II fumarase/aspartase family. Fumarase subfamily. In terms of assembly, homotetramer.

It is found in the cytoplasm. It carries out the reaction (S)-malate = fumarate + H2O. It participates in carbohydrate metabolism; tricarboxylic acid cycle; (S)-malate from fumarate: step 1/1. Involved in the TCA cycle. Catalyzes the stereospecific interconversion of fumarate to L-malate. This chain is Fumarate hydratase class II, found in Wigglesworthia glossinidia brevipalpis.